The chain runs to 147 residues: Hemoglobin subunit epsilon (147 aa).

The 145-residue stretch at 3–147 folds into the Globin domain; the sequence is HFTAEEKAAV…VAIALAHKYH (145 aa). Ser14 and Ser51 each carry phosphoserine. Positions 64 and 93 each coordinate heme b.

It belongs to the globin family. As to quaternary structure, heterotetramer of two alpha chains and two epsilon chains in early embryonic hemoglobin Gower-2; two zeta chains and two epsilon chains in early embryonic hemoglobin Gower-1. In terms of tissue distribution, red blood cells.

Functionally, the epsilon chain is a beta-type chain of early mammalian embryonic hemoglobin. This Symphalangus syndactylus (Siamang) protein is Hemoglobin subunit epsilon (HBE1).